The sequence spans 184 residues: Peptidyl-tRNA hydrolase (184 aa).

Residue tyrosine 14 participates in tRNA binding. The Proton acceptor role is filled by histidine 19. TRNA-binding residues include phenylalanine 64, asparagine 66, and asparagine 112.

It belongs to the PTH family. As to quaternary structure, monomer.

The protein localises to the cytoplasm. It catalyses the reaction an N-acyl-L-alpha-aminoacyl-tRNA + H2O = an N-acyl-L-amino acid + a tRNA + H(+). Functionally, hydrolyzes ribosome-free peptidyl-tRNAs (with 1 or more amino acids incorporated), which drop off the ribosome during protein synthesis, or as a result of ribosome stalling. Catalyzes the release of premature peptidyl moieties from peptidyl-tRNA molecules trapped in stalled 50S ribosomal subunits, and thus maintains levels of free tRNAs and 50S ribosomes. The protein is Peptidyl-tRNA hydrolase of Thermoanaerobacter pseudethanolicus (strain ATCC 33223 / 39E) (Clostridium thermohydrosulfuricum).